We begin with the raw amino-acid sequence, 447 residues long: Phosphoglucosamine mutase (447 aa).

Serine 106 serves as the catalytic Phosphoserine intermediate. Serine 106, aspartate 245, aspartate 247, and aspartate 249 together coordinate Mg(2+). Phosphoserine is present on serine 106.

It belongs to the phosphohexose mutase family. Requires Mg(2+) as cofactor. In terms of processing, activated by phosphorylation.

It catalyses the reaction alpha-D-glucosamine 1-phosphate = D-glucosamine 6-phosphate. Catalyzes the conversion of glucosamine-6-phosphate to glucosamine-1-phosphate. The protein is Phosphoglucosamine mutase of Cupriavidus taiwanensis (strain DSM 17343 / BCRC 17206 / CCUG 44338 / CIP 107171 / LMG 19424 / R1) (Ralstonia taiwanensis (strain LMG 19424)).